The sequence spans 397 residues: MAQSPPPQSLLGHDHWIFAQGWGWAGHWDSTSPASSSDSSGSCPCDGARGLPQPQPPSCSSRAAEAAATTPRRARTGPAGGQRQSASEREKLRMRTLARALHELRRFLPPSLAPAGQSLTKIETLRLAIRYIGHLSAVLGLSEESLQCRRRQRGDAGSPWGCPLCPDRGPAEAQTQAEGQGQGQGQGQGQGQGQGQGQGQGQGQGRRPGLVSAVLAEASWGSPSACPGAQAAPERLGRGVHDTDPWATPPYCPKIQSPPYSSQGTTSDASLWTPPQGCPWTQSSPEPRNPPVPWTAAPATLELAAVYQGLSVSPEPCLSLGAPSLLPHPSCQRLQPQTPGRCWSHSAEVVPNSEDQGPGAAFQLSEASPPQSSGLRFSGCPELWQEDLEGARLGIFY.

Disordered regions lie at residues 28–92, 152–208, 222–295, and 351–376; these read WDST…REKL, QRGD…GRRP, SPSA…VPWT, and PNSEDQGPGAAFQLSEASPPQSSGLR. 2 stretches are compositionally biased toward low complexity: residues 32–48 and 58–71; these read SPASSSDSSGSCPCDGA and SCSSRAAEAAATTP. The bHLH domain maps to 81–135; it reads GQRQSASEREKLRMRTLARALHELRRFLPPSLAPAGQSLTKIETLRLAIRYIGHL. Tandem repeats lie at residues 179-180, 181-182, 183-184, 185-186, 187-188, 189-190, 191-192, 193-194, 195-196, 197-198, 199-200, 201-202, and 203-204. The 13 X 2 AA tandem repeats of G-Q stretch occupies residues 179 to 204; sequence GQGQGQGQGQGQGQGQGQGQGQGQGQ. Gly residues predominate over residues 180–206; the sequence is QGQGQGQGQGQGQGQGQGQGQGQGQGR. Residues 235-244 show a composition bias toward basic and acidic residues; sequence RLGRGVHDTD. Polar residues-rich tracts occupy residues 258-270 and 365-375; these read PPYSSQGTTSDAS and SEASPPQSSGL.

Degraded by the proteasome.

It localises to the nucleus. Its function is as follows. Transcription factor with important role in somitogenesis. Defines the rostrocaudal patterning of the somite by participating in distinct Notch pathways. Also regulates the FGF signaling pathway. Specifies the rostral half of the somites. Generates rostro-caudal polarity of somites by down-regulating in the presumptive rostral domain DLL1, a Notch ligand. Participates in the segment border formation by activating in the anterior presomitic mesoderm LFNG, a negative regulator of DLL1-Notch signaling. Acts as a strong suppressor of Notch activity. Together with MESP1 is involved in the epithelialization of somitic mesoderm and in the development of cardiac mesoderm. In Homo sapiens (Human), this protein is Mesoderm posterior protein 2 (MESP2).